A 173-amino-acid polypeptide reads, in one-letter code: Translation initiation factor IF-3 (173 aa).

It belongs to the IF-3 family. As to quaternary structure, monomer.

It localises to the cytoplasm. Its function is as follows. IF-3 binds to the 30S ribosomal subunit and shifts the equilibrium between 70S ribosomes and their 50S and 30S subunits in favor of the free subunits, thus enhancing the availability of 30S subunits on which protein synthesis initiation begins. This Bartonella bacilliformis (strain ATCC 35685 / KC583 / Herrer 020/F12,63) protein is Translation initiation factor IF-3.